We begin with the raw amino-acid sequence, 199 residues long: MNCVCRLVLVVLSLWPDRVVAPGPPAGSPRVSSDPRADLDSAVLLTRSLLADTRQLAAQMRDKFPADGDHNLDSLPTLAMSAGTLGSLQLPGVLTRLRVDLMSYFRHVQWLRRAAGPSLKTLEPELGALQARLERLLRRLQLLMSRLALPQAAPDQPAVPLGPPASAWGSIRAAHAILGGLHLTLDWAVRGLLLLKTRL.

The first 21 residues, 1 to 21 (MNCVCRLVLVVLSLWPDRVVA), serve as a signal peptide directing secretion. The tract at residues 182–190 (HLTLDWAVR) is important for interaction with IL11RA and for the stimulation of cell proliferation.

Belongs to the IL-6 superfamily. As to quaternary structure, interacts with IL11RA to associate with IL6ST, giving rise to a multimeric signaling complex.

The protein resides in the secreted. In terms of biological role, cytokine that stimulates the proliferation of hematopoietic stem cells and megakaryocyte progenitor cells and induces megakaryocyte maturation resulting in increased platelet production. Also promotes the proliferation of hepatocytes in response to liver damage. Binding to its receptor formed by IL6ST and IL11RA activates a signaling cascade that promotes cell proliferation. Signaling leads to the activation of intracellular protein kinases and the phosphorylation of STAT3. The interaction with the membrane-bound IL11RA and IL6ST stimulates 'classic signaling', whereas the binding of IL11 and soluble IL11RA to IL6ST stimulates 'trans-signaling'. In Rattus norvegicus (Rat), this protein is Interleukin-11.